The chain runs to 329 residues: Aspartate--ammonia ligase (329 aa).

Belongs to the class-II aminoacyl-tRNA synthetase family. AsnA subfamily.

The protein resides in the cytoplasm. It carries out the reaction L-aspartate + NH4(+) + ATP = L-asparagine + AMP + diphosphate + H(+). It functions in the pathway amino-acid biosynthesis; L-asparagine biosynthesis; L-asparagine from L-aspartate (ammonia route): step 1/1. The polypeptide is Aspartate--ammonia ligase (Ureaplasma urealyticum serovar 10 (strain ATCC 33699 / Western)).